The sequence spans 541 residues: Chaperonin GroEL (541 aa).

ATP contacts are provided by residues 29-32 (TLGP), 86-90 (DGTTT), Gly-413, and Asp-495.

The protein belongs to the chaperonin (HSP60) family. Forms a cylinder of 14 subunits composed of two heptameric rings stacked back-to-back. Interacts with the co-chaperonin GroES.

The protein localises to the cytoplasm. The enzyme catalyses ATP + H2O + a folded polypeptide = ADP + phosphate + an unfolded polypeptide.. Functionally, together with its co-chaperonin GroES, plays an essential role in assisting protein folding. The GroEL-GroES system forms a nano-cage that allows encapsulation of the non-native substrate proteins and provides a physical environment optimized to promote and accelerate protein folding. The polypeptide is Chaperonin GroEL (Thermoanaerobacter pseudethanolicus (strain ATCC 33223 / 39E) (Clostridium thermohydrosulfuricum)).